A 2008-amino-acid polypeptide reads, in one-letter code: Histone-lysine N-methyltransferase SETD1B (2008 aa).

The span at methionine 1–lysine 20 shows a compositional bias: basic and acidic residues. The interval methionine 1–lysine 42 is disordered. Positions glutamine 22 to serine 39 are enriched in polar residues. Residues aspartate 111–lysine 199 enclose the RRM domain. 9 disordered regions span residues asparagine 249–lysine 390, phenylalanine 402–threonine 652, proline 682–proline 725, arginine 950–glutamate 1172, threonine 1309–glutamate 1328, valine 1345–threonine 1461, valine 1563–glycine 1600, lysine 1674–arginine 1712, and glutamate 1814–glutamate 1842. Residues serine 251 to proline 264 are compositionally biased toward low complexity. Composition is skewed to polar residues over residues phenylalanine 265–proline 293, proline 301–proline 315, histidine 360–leucine 381, serine 405–serine 414, and aspartate 456–serine 491. Basic and acidic residues predominate over residues leucine 492 to methionine 521. Over residues serine 524–proline 537 the composition is skewed to low complexity. Polar residues-rich tracts occupy residues glycine 540–glycine 560 and alanine 582–arginine 604. Basic and acidic residues-rich tracts occupy residues serine 606–valine 617 and glutamate 626–glycine 636. Acidic residues predominate over residues glutamate 637–methionine 646. Over residues glutamate 979–glutamate 997 the composition is skewed to basic and acidic residues. The segment covering leucine 1011 to glutamate 1020 has biased composition (acidic residues). The span at threonine 1021–glutamate 1031 shows a compositional bias: basic and acidic residues. Acidic residues-rich tracts occupy residues glutamate 1050–alanine 1094 and glutamate 1105–aspartate 1149. Basic and acidic residues predominate over residues arginine 1150–glutamate 1172. Positions valine 1345–proline 1356 are enriched in low complexity. Residues serine 1378–leucine 1392 are compositionally biased toward basic and acidic residues. Positions leucine 1418–serine 1427 are enriched in low complexity. Basic residues-rich tracts occupy residues leucine 1577–arginine 1587 and lysine 1681–lysine 1690. A compositionally biased stretch (pro residues) spans isoleucine 1699–glutamine 1710. Positions arginine 1840–arginine 1845 match the RxxxRR motif motif. Residues lysine 1869–lysine 1986 form the SET domain. Tyrosine 1985 is an S-adenosyl-L-methionine binding site. Residues valine 1992–asparagine 2008 form the Post-SET domain.

Belongs to the class V-like SAM-binding methyltransferase superfamily. Component of the SET1B/COMPASS complex.

The protein localises to the nucleus speckle. It localises to the chromosome. It carries out the reaction L-lysyl(4)-[histone H3] + 3 S-adenosyl-L-methionine = N(6),N(6),N(6)-trimethyl-L-lysyl(4)-[histone H3] + 3 S-adenosyl-L-homocysteine + 3 H(+). Its function is as follows. Histone methyltransferase that specifically methylates 'Lys-4' of histone H3, when part of the SET1 histone methyltransferase (HMT) complex, but not if the neighboring 'Lys-9' residue is already methylated. H3 'Lys-4' methylation represents a specific tag for epigenetic transcriptional activation. In Gallus gallus (Chicken), this protein is Histone-lysine N-methyltransferase SETD1B (SETD1B).